The primary structure comprises 317 residues: Spore protein CgeB (317 aa).

May be involved in maturation of the outermost layer of the spore. May act as a glycosyltransferase that contributes to the glycosylation state of the spore. This Bacillus subtilis (strain 168) protein is Spore protein CgeB.